The following is a 307-amino-acid chain: MDSRGFDSEGREFSSATEMWAHEIGAAADAPVSAAVAEPAPAPAAGSNGVAGEQEAGGGGKREEWYSKAIAYWQGVEASTEGVLGGYGCVNDVDVKGSDAFLRPLLAERFGAARRHLVALDCGSGIGRVTKNFLLRHFNEVDLVEPVSHFLEAAQENLTECMEVGEDTHKAANFYCVPLQDFTPDEGRYDVIWIQWCIGQLPDDDFISFFNRAKIGLKPNGFFVLKENIARNGFVLDKEDNSITRSDAYFKELFKKCGLYIHSIKDQSDLPKELFAVKMYALVTEKPKIQKNGKRRRPKNSPRMIRS.

Residues 38–54 (EPAPAPAAGSNGVAGEQ) show a composition bias toward low complexity. The segment at 38-60 (EPAPAPAAGSNGVAGEQEAGGGG) is disordered. S-adenosyl-L-methionine-binding positions include Gly-123, Arg-128, 145-147 (EPV), 179-180 (LQ), and Gln-195.

Belongs to the methyltransferase superfamily. NTM1 family.

It carries out the reaction N-terminal L-alanyl-L-prolyl-L-lysyl-[protein] + 3 S-adenosyl-L-methionine = N-terminal N,N,N-trimethyl-L-alanyl-L-prolyl-L-lysyl-[protein] + 3 S-adenosyl-L-homocysteine + 3 H(+). The catalysed reaction is N-terminal L-seryl-L-prolyl-L-lysyl-[protein] + 3 S-adenosyl-L-methionine = N-terminal N,N,N-trimethyl-L-seryl-L-prolyl-L-lysyl-[protein] + 3 S-adenosyl-L-homocysteine + 3 H(+). It catalyses the reaction N-terminal L-prolyl-L-prolyl-L-lysyl-[protein] + 2 S-adenosyl-L-methionine = N-terminal N,N-dimethyl-L-prolyl-L-prolyl-L-lysyl-[protein] + 2 S-adenosyl-L-homocysteine + 2 H(+). Its function is as follows. Alpha-N-methyltransferase that methylates the N-terminus of target proteins containing the N-terminal motif [Ala/Pro/Ser]-Pro-Lys when the initiator Met is cleaved. Specifically catalyzes mono-, di- or tri-methylation of exposed alpha-amino group of Ala or Ser residue in the [Ala/Ser]-Pro-Lys motif and mono- or di-methylation of Pro in the Pro-Pro-Lys motif. In Oryza sativa subsp. indica (Rice), this protein is Alpha N-terminal protein methyltransferase 1.